The primary structure comprises 361 residues: Chorismate synthase (361 aa).

An NADP(+)-binding site is contributed by Arg48. FMN is bound by residues 125–127 (RSS), 238–239 (NA), Gly278, 293–297 (KPTSS), and Arg319.

This sequence belongs to the chorismate synthase family. Homotetramer. It depends on FMNH2 as a cofactor.

The enzyme catalyses 5-O-(1-carboxyvinyl)-3-phosphoshikimate = chorismate + phosphate. Its pathway is metabolic intermediate biosynthesis; chorismate biosynthesis; chorismate from D-erythrose 4-phosphate and phosphoenolpyruvate: step 7/7. Its function is as follows. Catalyzes the anti-1,4-elimination of the C-3 phosphate and the C-6 proR hydrogen from 5-enolpyruvylshikimate-3-phosphate (EPSP) to yield chorismate, which is the branch point compound that serves as the starting substrate for the three terminal pathways of aromatic amino acid biosynthesis. This reaction introduces a second double bond into the aromatic ring system. The protein is Chorismate synthase of Aliivibrio fischeri (strain ATCC 700601 / ES114) (Vibrio fischeri).